Here is a 40-residue protein sequence, read N- to C-terminus: U1-ectatotoxin-Eb1a subunit A (40 aa).

This sequence belongs to the ectatomin family. Ectatomin-Eq subfamily. Heterodimer of subunits A and B; disulfide-linked. Expressed by the venom gland.

Its subcellular location is the secreted. The protein resides in the target cell membrane. This chain is U1-ectatotoxin-Eb1a subunit A, found in Ectatomma brunneum (Ant).